A 105-amino-acid chain; its full sequence is Small ribosomal subunit protein uS10 (105 aa).

Belongs to the universal ribosomal protein uS10 family. As to quaternary structure, part of the 30S ribosomal subunit.

In terms of biological role, involved in the binding of tRNA to the ribosomes. The chain is Small ribosomal subunit protein uS10 from Lachnoclostridium phytofermentans (strain ATCC 700394 / DSM 18823 / ISDg) (Clostridium phytofermentans).